The chain runs to 356 residues: Alpha-N-acetylneuraminide alpha-2,8-sialyltransferase (356 aa).

Residues methionine 1–proline 29 are Cytoplasmic-facing. Residues valine 30–valine 48 traverse the membrane as a helical; Signal-anchor for type II membrane protein segment. Residues tyrosine 49–serine 356 lie on the Lumenal side of the membrane. N-linked (GlcNAc...) asparagine glycosylation is found at asparagine 71 and asparagine 119. Cysteine 138 and cysteine 287 are oxidised to a cystine. CMP-N-acetyl-beta-neuraminate-binding residues include asparagine 143 and asparagine 166. 2 N-linked (GlcNAc...) asparagine glycosylation sites follow: asparagine 214 and asparagine 245. Residues serine 274, threonine 275, glycine 276, tryptophan 296, and histidine 310 each coordinate CMP-N-acetyl-beta-neuraminate.

This sequence belongs to the glycosyltransferase 29 family.

Its subcellular location is the golgi apparatus membrane. It catalyses the reaction an N-acetyl-alpha-neuraminyl-(2-&gt;3)-beta-D-galactosyl derivative + CMP-N-acetyl-beta-neuraminate = an N-acetyl-alpha-neuraminyl-(2-&gt;8)-N-acetyl-alpha-neuraminyl-(2-&gt;3)-beta-D-galactosyl derivative + CMP + H(+). The catalysed reaction is a ganglioside GM3 (d18:1(4E)) + CMP-N-acetyl-beta-neuraminate = a ganglioside GD3 (d18:1(4E)) + CMP + H(+). The enzyme catalyses a ganglioside GD3 (d18:1(4E)) + CMP-N-acetyl-beta-neuraminate = a ganglioside GT3 (d18:1(4E)) + CMP + H(+). It carries out the reaction a ganglioside GD1a (d18:1(4E)) + CMP-N-acetyl-beta-neuraminate = a ganglioside GT1a (d18:1(4E)) + CMP + H(+). It catalyses the reaction a ganglioside GT1b (d18:1(4E)) + CMP-N-acetyl-beta-neuraminate = a ganglioside GQ1b (d18:1(4E)) + CMP + H(+). The catalysed reaction is a ganglioside GM1b (d18:1(4E)) + CMP-N-acetyl-beta-neuraminate = a ganglioside GD1c (d18:1(4E)) + CMP + H(+). The enzyme catalyses a ganglioside GD3 + CMP-N-acetyl-beta-neuraminate = a ganglioside GT3 + CMP + H(+). It carries out the reaction [alpha-N-acetylneuraminyl-(2-&gt;8)](n)-alpha-N-acetylneuraminyl-(2-&gt;8)-alpha-N-acetylneuraminyl-(2-&gt;3)-beta-D-galactosyl-(1-&gt;4)-beta-D-glucosyl-(1&lt;-&gt;1)-ceramide + CMP-N-acetyl-beta-neuraminate = [alpha-N-acetylneuraminyl-(2-&gt;8)](n+1)-alpha-N-acetylneuraminyl-(2-&gt;8)-alpha-N-acetylneuraminyl-(2-&gt;3)-beta-D-galactosyl-(1-&gt;4)-beta-D-glucosyl-(1&lt;-&gt;1)-ceramide + CMP + H(+). Its pathway is protein modification; protein glycosylation. It participates in lipid metabolism; sphingolipid metabolism. Functionally, catalyzes the addition of sialic acid in alpha 2,8-linkage to the sialic acid moiety of the ganglioside GM3 to form ganglioside GD3; gangliosides are a subfamily of complex glycosphingolipds that contain one or more residues of sialic acid. Can catalyze the addition of a second alpha-2,8- sialic acid to GD3 to form GT3. Can use GM1b, GD1a and GT1b as acceptor substrates to synthesize GD1c, GT1a and GQ1b respectively. The polypeptide is Alpha-N-acetylneuraminide alpha-2,8-sialyltransferase (Bos taurus (Bovine)).